The sequence spans 344 residues: Arginine N-succinyltransferase (344 aa).

Leu-125 lines the succinyl-CoA pocket. The active-site Proton donor is the His-229.

It belongs to the arginine N-succinyltransferase family.

The enzyme catalyses succinyl-CoA + L-arginine = N(2)-succinyl-L-arginine + CoA + H(+). It functions in the pathway amino-acid degradation; L-arginine degradation via AST pathway; L-glutamate and succinate from L-arginine: step 1/5. Catalyzes the transfer of succinyl-CoA to arginine to produce N(2)-succinylarginine. The chain is Arginine N-succinyltransferase from Escherichia fergusonii (strain ATCC 35469 / DSM 13698 / CCUG 18766 / IAM 14443 / JCM 21226 / LMG 7866 / NBRC 102419 / NCTC 12128 / CDC 0568-73).